Consider the following 546-residue polypeptide: Adenine DNA glycosylase (546 aa).

A disordered region spans residues 19-51 (RAAVGSGHRKQAASQEGRQKHAKNNSQAKPSAC). E131 (proton donor/acceptor) is an active-site residue. Residues C287, C294, C297, and C303 each contribute to the [4Fe-4S] cluster site. Residues 364 to 495 (PREESSATCV…AMKKVFRVYQ (132 aa)) form the Nudix hydrolase domain. The short motif at 404–426 (VTWEPSEQLQRKALLQELQRWAG) is the Nudix box element.

Belongs to the Nth/MutY family. [4Fe-4S] cluster serves as cofactor.

It localises to the nucleus. The protein localises to the mitochondrion. The catalysed reaction is Hydrolyzes free adenine bases from 7,8-dihydro-8-oxoguanine:adenine mismatched double-stranded DNA, leaving an apurinic site.. Its function is as follows. Involved in oxidative DNA damage repair. Initiates repair of A*oxoG to C*G by removing the inappropriately paired adenine base from the DNA backbone. Possesses both adenine and 2-OH-A DNA glycosylase activities. The polypeptide is Adenine DNA glycosylase (MUTYH) (Homo sapiens (Human)).